We begin with the raw amino-acid sequence, 424 residues long: Transcription regulator spe-44 (424 aa).

The 86-residue stretch at 65-150 (PLQITIPEGD…RTHMEAMTID (86 aa)) folds into the SAND domain. Disordered stretches follow at residues 178 to 228 (ARKS…KPRQ) and 371 to 394 (EHSV…AREF). Residues 192–210 (YEIENEMAGKEADNDDNRK) show a composition bias toward basic and acidic residues. A compositionally biased stretch (polar residues) spans 378–388 (PRTSSSSQESL).

The protein resides in the chromosome. It is found in the nucleus. In terms of biological role, transcription factor which controls spermatogenesis and sperm cell fate by regulation of sperm gene expression. The chain is Transcription regulator spe-44 from Caenorhabditis elegans.